We begin with the raw amino-acid sequence, 623 residues long: DNA mismatch repair protein MutL (623 aa).

Residues 353-368 (AQQSAPRPANSYSPAS) show a composition bias toward polar residues. The interval 353 to 389 (AQQSAPRPANSYSPASWRTAPPAPRSEWSPQTAQTAH) is disordered.

The protein belongs to the DNA mismatch repair MutL/HexB family.

Its function is as follows. This protein is involved in the repair of mismatches in DNA. It is required for dam-dependent methyl-directed DNA mismatch repair. May act as a 'molecular matchmaker', a protein that promotes the formation of a stable complex between two or more DNA-binding proteins in an ATP-dependent manner without itself being part of a final effector complex. The chain is DNA mismatch repair protein MutL from Brucella melitensis biotype 2 (strain ATCC 23457).